Consider the following 761-residue polypeptide: ARF GTPase-activating protein GIT1 (761 aa).

The region spanning 1–124 (MSRKGPRAEV…AFVHKLPCRD (124 aa)) is the Arf-GAP domain. Residues 1 to 124 (MSRKGPRAEV…AFVHKLPCRD (124 aa)) are interaction with gamma-tubulin and localization to the centrosome. The C4-type zinc finger occupies 11–34 (CADCSAPDPGWASISRGVLVCDEC). ANK repeat units lie at residues 132–161 (DLSK…QANF), 166–195 (KGTT…DPGS), and 199–228 (NGRT…ELTD). Position 224 is a phosphotyrosine (Tyr224). Residues 245–365 (HYIIPQMADS…QGKSLSSPTD (121 aa)) are interaction with PCLO. The segment at 253 to 415 (DSLDLSELAK…NRARSMDSSD (163 aa)) is interaction with PTK2/FAK1. An interaction with ARHGEF7 region spans residues 254–367 (SLDLSELAKA…KSLSSPTDNL (114 aa)). The segment at 354-416 (RQQGKSLSSP…RARSMDSSDL (63 aa)) is disordered. Polar residues predominate over residues 357–374 (GKSLSSPTDNLELSLRSQ). Ser359 and Ser362 each carry phosphoserine. The residue at position 364 (Thr364) is a Phosphothreonine. An interaction with NCK2 and GRIN3A region spans residues 366–587 (NLELSLRSQS…QEGSRHTSKL (222 aa)). Positions 366-587 (NLELSLRSQS…QEGSRHTSKL (222 aa)) are required for localization at synapses. A phosphoserine mark is found at Ser370 and Ser375. The residue at position 383 (Tyr383) is a Phosphotyrosine. Residues Ser385 and Ser388 each carry the phosphoserine modification. Residues 385 to 394 (SVASDEDTDQ) are compositionally biased toward acidic residues. Thr392 carries the phosphothreonine modification. Residues Ser410, Ser413, and Ser417 each carry the phosphoserine modification. Residues 411–466 (MDSSDLSDGAVTLQEYLELKKALATSEAKVQQLMKVNSSLSDELRRLQREIHKLQA) are interaction with MAPK1. The interaction with IKBKG stretch occupies residues 420 to 620 (AVTLQEYLEL…EGKRFLELGK (201 aa)). The stretch at 440–474 (VQQLMKVNSSLSDELRRLQREIHKLQAENLQLRQP) forms a coiled coil. The interval 471 to 501 (LRQPPGPVPTPPLPSERAEHTPMAPGGSTHR) is disordered. Pro residues predominate over residues 474–484 (PPGPVPTPPLP). Thr480 is subject to Phosphothreonine. Residues Ser498 and Ser536 each carry the phosphoserine modification. Thr537 carries the post-translational modification Phosphothreonine. 2 positions are modified to phosphotyrosine: Tyr545 and Tyr554. A phosphoserine mark is found at Ser561, Ser571, Ser592, and Ser596. The segment at 572–606 (PLLSCSQEGSRHTSKLSRHGSGADSDYENTQSGDP) is disordered. Thr601 bears the Phosphothreonine mark. Ser630 is modified (phosphoserine). The tract at residues 637 to 761 (PGLPSTEDVI…VTITTREKKQ (125 aa)) is interaction with PXN and TGFB1I1.

In terms of assembly, forms homodimers and possibly oligomers. May forms heterooligomers with GIT2. Interacts with G protein-coupled receptor kinases, including GRK2, GRK3, GRK5 and GRK6. Interacts with PPFIA1, PPFIA2 and PPFIA4. Interacts with GRIP1 and forms a ternary complex with PPFIA1 and GRIP1. Directly interacts with ARHGEF7/beta-PIX, forming in vitro a heptameric complex made of a GIT1 dimer and an ARHGEF7 trimer. Directly interacts with PXN/paxillin; this interaction is enhanced in the presence of ARHGEF7. Directly interacts (via C-terminus) with TGFB1I1/Hic-5 (via LD motif 3). Directly interacts with PTK2/FAK1. May interact with PTK2B/PYK2; this interaction may be indirect. Interacts with AMPA receptors GRIA2/3. Directly interacts with protein Piccolo/PCLO. Forms a complex with Ephrin-B1/EFNB1 and NCK2/GRB4 (via SH2); this interaction is important for spine morphogenesis and synapse formation. Interaction with NCK2 is transient and depends upon GIT1 phosphorylation at Tyr-383. Interacts with GRIN3A/GluN3A (via C-terminus); this interaction competes with GIT1 interaction with ARHGEF7 and limits synaptic localization of GIT1. Interacts with IKBKG/NEMO in resting bone mesenchymal stem cells, as well as in TNF-stimulated cells; this interaction may increase IKBKG affinity for 'Lys-63'-linked polyubiquitin chains. Interacts with GABA(A) receptors, including GABRB3 and GABRG2. Interacts with SCRIB. Interacts (via N- and C-terminus) with ENTR1/SDCCAG3 (via N-terminus); this interaction is direct. May form a tripartite complex with ENTR1 and PTPN13. Interacts with YWHAZ. Interacts with PAK1. Interacts with PAK3. Directly interacts (via N-terminus) with gamma-tubulin. Interacts with MAPK1 and MAPK3; this interaction is required for MAPK1/3 recruitment to focal adhesions. In terms of processing, phosphorylated by PAK1. Phosphorylation on tyrosine residues may be catalyzed by PTK2/FAK1 and SRC in growing fibroblasts. Phosphorylation at Tyr-383 is induced by activation of Ephrin-B1/EFNB1 and catalyzed by SRC family kinases. It is required for the interaction with NCK2 and for GIT1 recruitment to synapses in hippocampal neurons.

It is found in the cytoplasm. The protein resides in the synapse. Its subcellular location is the presynapse. It localises to the postsynapse. The protein localises to the postsynaptic density. It is found in the cell junction. The protein resides in the focal adhesion. Its subcellular location is the cell projection. It localises to the lamellipodium. The protein localises to the cytoskeleton. It is found in the microtubule organizing center. The protein resides in the centrosome. Its subcellular location is the spindle pole. GTPase-activating protein for ADP ribosylation factor family members, including ARF1. Multidomain scaffold protein that interacts with numerous proteins and therefore participates in many cellular functions, including receptor internalization, focal adhesion remodeling, and signaling by both G protein-coupled receptors and tyrosine kinase receptors. Through PAK1 activation, positively regulates microtubule nucleation during interphase. Plays a role in the regulation of cytokinesis; for this function, may act in a pathway also involving ENTR1 and PTPN13. May promote cell motility both by regulating focal complex dynamics and by local activation of RAC1. May act as scaffold for MAPK1/3 signal transduction in focal adhesions. Recruits MAPK1/3/ERK1/2 to focal adhesions after EGF stimulation via a Src-dependent pathway, hence stimulating cell migration. Plays a role in brain development and function. Involved in the regulation of spine density and synaptic plasticity that is required for processes involved in learning. Plays an important role in dendritic spine morphogenesis and synapse formation. In hippocampal neurons, recruits guanine nucleotide exchange factors (GEFs), such as ARHGEF7/beta-PIX, to the synaptic membrane. These in turn locally activate RAC1, which is an essential step for spine morphogenesis and synapse formation. May contribute to the organization of presynaptic active zones through oligomerization and formation of a Piccolo/PCLO-based protein network, which includes ARHGEF7/beta-PIX and FAK1. In neurons, through its interaction with liprin-alpha family members, may be required for AMPA receptor (GRIA2/3) proper targeting to the cell membrane. In complex with GABA(A) receptors and ARHGEF7, plays a crucial role in regulating GABA(A) receptor synaptic stability, maintaining GPHN/gephyrin scaffolds and hence GABAergic inhibitory synaptic transmission, by locally coordinating RAC1 and PAK1 downstream effector activity, leading to F-actin stabilization. May also be important for RAC1 downstream signaling pathway through PAK3 and regulation of neuronal inhibitory transmission at presynaptic input. Required for successful bone regeneration during fracture healing. The function in intramembranous ossification may, at least partly, exerted by macrophages in which GIT1 is a key negative regulator of redox homeostasis, IL1B production, and glycolysis, acting through the ERK1/2/NRF2/NFE2L2 axis. May play a role in angiogenesis during fracture healing. In this process, may regulate activation of the canonical NF-kappa-B signal in bone mesenchymal stem cells by enhancing the interaction between NEMO and 'Lys-63'-ubiquitinated RIPK1/RIP1, eventually leading to enhanced production of VEGFA and others angiogenic factors. Essential for VEGF signaling through the activation of phospholipase C-gamma and ERK1/2, hence may control endothelial cell proliferation and angiogenesis. In Homo sapiens (Human), this protein is ARF GTPase-activating protein GIT1 (GIT1).